Here is a 778-residue protein sequence, read N- to C-terminus: DNA repair protein crb2 (778 aa).

The segment at 35–56 (KVNASINPSPPRSNDNSNKEFS) is disordered. T73 is subject to Phosphothreonine; by ATM. A Phosphoserine; by ATM modification is found at S80. The segment at 141-245 (VSNSSQILSP…PPAFLPETSE (105 aa)) is interaction with rad4. T187 carries the phosphothreonine modification. A Phosphothreonine; by cdc2 modification is found at T215. At T235 the chain carries Phosphothreonine. Residues 358-493 (SRRSFKNRVL…RRFQGRDLSF (136 aa)) are tudor-like. The segment at 370–404 (FKGYPSFYYPATLVAPVHSAVTSSIMYKVQFDDAT) is interaction with dimethylated histone H4. The BRCT domain maps to 535 to 653 (SNQLIFDDCV…RVVDFSPYLL (119 aa)).

Homodimer. Dimerization is mediated via the BRCT domain. Interacts (via BRCT domain) with rad3. Interacts with rad4 (via BRCT1,2 domains); a single rad4 molecule interacts simultaneously with both Thr-187 phosphorylation sites in a crb2 dimer. Interacts (via Tudor domain) with histone H4K20me2. Interacts (via BRCT dmain) with histone H2AS128ph (gamma-H2A). Interacts with chk1. Interacts with sad1. In terms of processing, phosphorylation of Thr-73 and Ser-80 by rad3/ATM promotes interaction with chk1. Phosphorylation at Thr-187 is dependent on phosphorylation at Thr-215 and Thr-235. Phosphorylation at Thr-215 and Thr-235 may prime the non-canonical Thr-187 site for cdc2/CDK phosphorylation.

The protein localises to the nucleus. Functionally, essential for cell cycle arrest at the G1 and G2 stages following DNA damage by X-, and UV-irradiation, or inactivation of DNA ligase. Plays a role in the response to DNA damage. Interaction with rad4 via its phosphorylation sites in the N-terminus couples the DNA checkpoint apparatus to chromatin via interaction of its C-terminal BRCT domains with epigenetic modifications on histones H4 and H2A, respectively, in the G1/S phase of the cell cycle, and facilitates recruitment of the checkpoint kinase chk1. This is DNA repair protein crb2 from Schizosaccharomyces pombe (strain 972 / ATCC 24843) (Fission yeast).